The primary structure comprises 414 residues: Carboxyl-terminal-processing protease (414 aa).

A signal peptide spans 1–29 (MLRKRLQAGLCSLLLVLVLVFGPMERAIA). Positions 100–184 (YRSLKVSTSG…STVSLTVKSP (85 aa)) constitute a PDZ domain. Residues Ser-310, Asp-321, and Lys-335 each act as charge relay system in the active site.

This sequence belongs to the peptidase S41A family.

The protein resides in the cellular thylakoid lumen. It catalyses the reaction The enzyme shows specific recognition of a C-terminal tripeptide, Xaa-Yaa-Zaa, in which Xaa is preferably Ala or Leu, Yaa is preferably Ala or Tyr, and Zaa is preferably Ala, but then cleaves at a variable distance from the C-terminus. A typical cleavage is -Ala-Ala-|-Arg-Ala-Ala-Lys-Glu-Asn-Tyr-Ala-Leu-Ala-Ala.. Functionally, cleavage of the 16 C-terminal residues from the D1 precursor of photosystem II (PSII). This proteolytic processing is necessary to allow the light-driven assembly of the oxygen-evolving cluster (a tetranuclear manganese), which is responsible for photosynthetic water oxidation. The chain is Carboxyl-terminal-processing protease (ctpA) from Picosynechococcus sp. (strain ATCC 27264 / PCC 7002 / PR-6) (Agmenellum quadruplicatum).